The sequence spans 64 residues: Large ribosomal subunit protein bL33c (64 aa).

The protein belongs to the bacterial ribosomal protein bL33 family.

It localises to the plastid. Its subcellular location is the chloroplast. This Cyanidium caldarium (Red alga) protein is Large ribosomal subunit protein bL33c (rpl33).